We begin with the raw amino-acid sequence, 462 residues long: Cytochrome b558/566 subunit A (462 aa).

Over 1 to 8 (MSLKIKSK) the chain is Cytoplasmic. A helical transmembrane segment spans residues 9–26 (ITIGVLLIIFLLSIIFTL). At 27-431 (ENVSLAQTSP…TSTSPVTTIS (405 aa)) the chain is on the extracellular side. 16 N-linked (GlcNAc...) asparagine glycosylation sites follow: Asn-28, Asn-65, Asn-91, Asn-121, Asn-144, Asn-164, Asn-174, Asn-183, Asn-211, Asn-278, Asn-279, Asn-293, Asn-316, Asn-339, Asn-353, and Asn-376. The helical transmembrane segment at 432 to 456 (SAIPPVTLYVTIIGVVVALVALVIL) threads the bilayer. The Cytoplasmic segment spans residues 457 to 462 (YVVFRR).

The cofactor is heme. N-glycosylated on at least seven Asn residues by identical hexasaccharide units composed of Man, GlcNAc, Glc and 6-deoxy-6-sulfoglucose residues in the molar ration of 2:2:1:1. In terms of processing, O-glycosylated on probably as many as 35 positions by single Man residues.

The protein resides in the cell membrane. In terms of biological role, monoheme cytochrome whose physiological function is not yet clear. This is Cytochrome b558/566 subunit A (cbsA) from Sulfolobus acidocaldarius (strain ATCC 33909 / DSM 639 / JCM 8929 / NBRC 15157 / NCIMB 11770).